Here is a 37-residue protein sequence, read N- to C-terminus: Large ribosomal subunit protein bL36c (37 aa).

Belongs to the bacterial ribosomal protein bL36 family.

The protein resides in the plastid. This chain is Large ribosomal subunit protein bL36c (rpl36), found in Euglena longa (Euglenophycean alga).